We begin with the raw amino-acid sequence, 231 residues long: uncharacterized protein (231 aa).

The Response regulatory domain occupies 4–116 (RILVVEDDED…ELHARVIAQL (113 aa)). Asp-52 is modified (4-aspartylphosphate). The ompR/PhoB-type DNA-binding region spans 129 to 230 (EETFLIGGKL…EWGRGYRFGA (102 aa)).

Phosphorylated by YrkQ.

It is found in the cytoplasm. In terms of biological role, member of the two-component regulatory system YrkQ/YrkP. This is an uncharacterized protein from Bacillus subtilis (strain 168).